The chain runs to 293 residues: AKT-interacting protein (293 aa).

Residues 1–11 (MNPFWSMSTSS) show a composition bias toward polar residues. The disordered stretch occupies residues 1–63 (MNPFWSMSTS…TSPAPAAQST (63 aa)). A compositionally biased stretch (basic and acidic residues) spans 14–23 (KRSEGEEKTL). Serine 30 carries the post-translational modification Phosphoserine. Residues 74–222 (YLEYSLLAEF…VVDSVQVCTA (149 aa)) enclose the UBC core domain. Basic and acidic residues predominate over residues 253 to 265 (MLTQKKKPEEQHN). The disordered stretch occupies residues 253 to 293 (MLTQKKKPEEQHNKSVHVAGLSWVKPGSVQPFSKEEKTVAT).

It belongs to the ubiquitin-conjugating enzyme family. FTS subfamily. Component of the FTS/Hook/FHIP complex (FHF complex), composed of AKTIP/FTS, FHIP1B, and one or more members of the Hook family of proteins HOOK1, HOOK2, and HOOK3. Interacts directly with HOOK1, HOOK2 and HOOK3. The FHF complex associates with the homotypic vesicular sorting complex (the HOPS complex). Also interacts with AKT1. May interact with FHIP1A.

It localises to the cytoplasm. Its subcellular location is the cell membrane. Functionally, component of the FTS/Hook/FHIP complex (FHF complex). The FHF complex may function to promote vesicle trafficking and/or fusion via the homotypic vesicular protein sorting complex (the HOPS complex). Regulates apoptosis by enhancing phosphorylation and activation of AKT1. Increases release of TNFSF6 via the AKT1/GSK3B/NFATC1 signaling cascade. FHF complex promotes the distribution of AP-4 complex to the perinuclear area of the cell. The polypeptide is AKT-interacting protein (AKTIP) (Pongo abelii (Sumatran orangutan)).